The primary structure comprises 398 residues: Candidapepsin-3 (398 aa).

The first 18 residues, 1 to 18 (MFLKNIFIALAIALLADA), serve as a signal peptide directing secretion. A propeptide spans 19 to 58 (TPTTSNNSPGFVALNFDVIKTHKNVTGPQGEINTNVNVKR) (activation peptide). A glycan (N-linked (GlcNAc...) asparagine) is linked at Asn42. A Peptidase A1 domain is found at 72 to 384 (YASDITVGSN…DLDDNEISLA (313 aa)). Asp90 is an active-site residue. Pepstatin A is bound at residue 90–92 (DTG). Over residues 103–112 (VSCQAGQGQD) the composition is skewed to polar residues. Residues 103–139 (VSCQAGQGQDPNFCKNEGTYSPSSSSSSQNLNSPFSI) are disordered. Cys105 and Cys116 are disulfide-bonded. Residues 123–138 (SPSSSSSSQNLNSPFS) are compositionally biased toward low complexity. Residues 140-143 (EYGD) and 274-278 (DSGTT) each bind pepstatin A. Asp274 is an active-site residue. Cysteines 312 and 350 form a disulfide. Asn313 carries an N-linked (GlcNAc...) asparagine glycan.

Belongs to the peptidase A1 family. In terms of processing, O-glycosylated.

It is found in the secreted. The enzyme catalyses Preferential cleavage at the carboxyl of hydrophobic amino acids, but fails to cleave 15-Leu-|-Tyr-16, 16-Tyr-|-Leu-17 and 24-Phe-|-Phe-25 of insulin B chain. Activates trypsinogen, and degrades keratin.. The sequence is that of Candidapepsin-3 (SAP3) from Candida albicans (strain WO-1) (Yeast).